The sequence spans 367 residues: Anthranilate phosphoribosyltransferase (367 aa).

5-phospho-alpha-D-ribose 1-diphosphate contacts are provided by residues glycine 105, 108 to 109, threonine 113, 115 to 118, 133 to 141, and glycine 145; these read GD, NIST, and KHGNRAASS. Glycine 105 contributes to the anthranilate binding site. A Mg(2+)-binding site is contributed by serine 117. Asparagine 136 contributes to the anthranilate binding site. An anthranilate-binding site is contributed by arginine 191. Residues aspartate 249 and glutamate 250 each contribute to the Mg(2+) site.

The protein belongs to the anthranilate phosphoribosyltransferase family. As to quaternary structure, homodimer. The cofactor is Mg(2+).

The catalysed reaction is N-(5-phospho-beta-D-ribosyl)anthranilate + diphosphate = 5-phospho-alpha-D-ribose 1-diphosphate + anthranilate. The protein operates within amino-acid biosynthesis; L-tryptophan biosynthesis; L-tryptophan from chorismate: step 2/5. In terms of biological role, catalyzes the transfer of the phosphoribosyl group of 5-phosphorylribose-1-pyrophosphate (PRPP) to anthranilate to yield N-(5'-phosphoribosyl)-anthranilate (PRA). The polypeptide is Anthranilate phosphoribosyltransferase (Corynebacterium jeikeium (strain K411)).